The primary structure comprises 205 residues: Holliday junction branch migration complex subunit RuvA (205 aa).

Residues 1 to 64 (MIGRLRGIVL…EDAQLLYGFN (64 aa)) are domain I. Residues 65-143 (DKQERALFRE…GLNGDLFNQS (79 aa)) form a domain II region. Residues 144 to 156 (SDINLPATAKQTT) form a flexible linker region. The domain III stretch occupies residues 157–205 (SDADSEAEAAAALVSLGYKPQEASRMVSKIAKPGADCETLIREALRAVL).

This sequence belongs to the RuvA family. Homotetramer. Forms an RuvA(8)-RuvB(12)-Holliday junction (HJ) complex. HJ DNA is sandwiched between 2 RuvA tetramers; dsDNA enters through RuvA and exits via RuvB. An RuvB hexamer assembles on each DNA strand where it exits the tetramer. Each RuvB hexamer is contacted by two RuvA subunits (via domain III) on 2 adjacent RuvB subunits; this complex drives branch migration. In the full resolvosome a probable DNA-RuvA(4)-RuvB(12)-RuvC(2) complex forms which resolves the HJ.

It is found in the cytoplasm. In terms of biological role, the RuvA-RuvB-RuvC complex processes Holliday junction (HJ) DNA during genetic recombination and DNA repair, while the RuvA-RuvB complex plays an important role in the rescue of blocked DNA replication forks via replication fork reversal (RFR). RuvA specifically binds to HJ cruciform DNA, conferring on it an open structure. The RuvB hexamer acts as an ATP-dependent pump, pulling dsDNA into and through the RuvAB complex. HJ branch migration allows RuvC to scan DNA until it finds its consensus sequence, where it cleaves and resolves the cruciform DNA. The protein is Holliday junction branch migration complex subunit RuvA of Photorhabdus laumondii subsp. laumondii (strain DSM 15139 / CIP 105565 / TT01) (Photorhabdus luminescens subsp. laumondii).